A 95-amino-acid chain; its full sequence is MKVSKEEVLHVAKLGQLDLDQEEVEMFQDKLSQILEWQEKLDELDLEGLEPTAHALERRNVTREDQVHNSLTNDKALENAPETEGNYFKVPRIIE.

A compositionally biased stretch (basic and acidic residues) spans 55-67 (ALERRNVTREDQV). Positions 55–83 (ALERRNVTREDQVHNSLTNDKALENAPET) are disordered.

It belongs to the GatC family. Heterotrimer of A, B and C subunits.

It carries out the reaction L-glutamyl-tRNA(Gln) + L-glutamine + ATP + H2O = L-glutaminyl-tRNA(Gln) + L-glutamate + ADP + phosphate + H(+). The catalysed reaction is L-aspartyl-tRNA(Asn) + L-glutamine + ATP + H2O = L-asparaginyl-tRNA(Asn) + L-glutamate + ADP + phosphate + 2 H(+). Allows the formation of correctly charged Asn-tRNA(Asn) or Gln-tRNA(Gln) through the transamidation of misacylated Asp-tRNA(Asn) or Glu-tRNA(Gln) in organisms which lack either or both of asparaginyl-tRNA or glutaminyl-tRNA synthetases. The reaction takes place in the presence of glutamine and ATP through an activated phospho-Asp-tRNA(Asn) or phospho-Glu-tRNA(Gln). The sequence is that of Aspartyl/glutamyl-tRNA(Asn/Gln) amidotransferase subunit C from Natranaerobius thermophilus (strain ATCC BAA-1301 / DSM 18059 / JW/NM-WN-LF).